The sequence spans 562 residues: Undecaprenyl phosphate-alpha-4-amino-4-deoxy-L-arabinose arabinosyl transferase (562 aa).

12 helical membrane passes run isoleucine 14–tyrosine 34, phenylalanine 91–phenylalanine 111, isoleucine 120–threonine 140, serine 142–alanine 162, phenylalanine 186–phenylalanine 206, threonine 215–tyrosine 235, proline 267–phenylalanine 287, isoleucine 302–glycine 322, leucine 324–glutamate 344, leucine 354–isoleucine 374, leucine 395–asparagine 415, and leucine 425–alanine 445.

It belongs to the glycosyltransferase 83 family.

It is found in the cell inner membrane. It carries out the reaction 4-amino-4-deoxy-alpha-L-arabinopyranosyl di-trans,octa-cis-undecaprenyl phosphate + lipid IVA = lipid IIA + di-trans,octa-cis-undecaprenyl phosphate.. Its pathway is lipopolysaccharide metabolism; 4-amino-4-deoxy-beta-L-arabinose-lipid A biosynthesis. Functionally, catalyzes the transfer of the L-Ara4N moiety of the glycolipid undecaprenyl phosphate-alpha-L-Ara4N to lipid A. The modified arabinose is attached to lipid A and is required for resistance to polymyxin and cationic antimicrobial peptides. The protein is Undecaprenyl phosphate-alpha-4-amino-4-deoxy-L-arabinose arabinosyl transferase of Wigglesworthia glossinidia brevipalpis.